The following is a 443-amino-acid chain: Ribosomal protein uS12 methylthiotransferase RimO (443 aa).

One can recognise an MTTase N-terminal domain in the interval 8 to 118 (PKIGFVSLGC…VLSHIHHYVP (111 aa)). The [4Fe-4S] cluster site is built by C17, C53, C82, C150, C154, and C157. One can recognise a Radical SAM core domain in the interval 136 to 373 (LTPRHYAYLK…MQLQQQISTE (238 aa)). One can recognise a TRAM domain in the interval 376–442 (QEKIGKVLPV…EYDLWGTIVE (67 aa)).

It belongs to the methylthiotransferase family. RimO subfamily. [4Fe-4S] cluster serves as cofactor.

It localises to the cytoplasm. The enzyme catalyses L-aspartate(89)-[ribosomal protein uS12]-hydrogen + (sulfur carrier)-SH + AH2 + 2 S-adenosyl-L-methionine = 3-methylsulfanyl-L-aspartate(89)-[ribosomal protein uS12]-hydrogen + (sulfur carrier)-H + 5'-deoxyadenosine + L-methionine + A + S-adenosyl-L-homocysteine + 2 H(+). Catalyzes the methylthiolation of an aspartic acid residue of ribosomal protein uS12. This is Ribosomal protein uS12 methylthiotransferase RimO from Proteus mirabilis (strain HI4320).